Here is a 122-residue protein sequence, read N- to C-terminus: Large ribosomal subunit protein uL14 (122 aa).

Belongs to the universal ribosomal protein uL14 family. Part of the 50S ribosomal subunit. Forms a cluster with proteins L3 and L19. In the 70S ribosome, L14 and L19 interact and together make contacts with the 16S rRNA in bridges B5 and B8.

Binds to 23S rRNA. Forms part of two intersubunit bridges in the 70S ribosome. This chain is Large ribosomal subunit protein uL14, found in Geobacillus kaustophilus (strain HTA426).